Here is a 226-residue protein sequence, read N- to C-terminus: ATP-dependent dethiobiotin synthetase BioD (226 aa).

14–19 (GIGKTF) lines the ATP pocket. T18 contacts Mg(2+). K39 is an active-site residue. S43 contributes to the substrate binding site. Residues D56, 117–120 (EGVG), 177–178 (NT), 206–208 (PHI), and N213 contribute to the ATP site. 2 residues coordinate Mg(2+): D56 and E117.

Belongs to the dethiobiotin synthetase family. In terms of assembly, homodimer. Mg(2+) is required as a cofactor.

The protein resides in the cytoplasm. The enzyme catalyses (7R,8S)-7,8-diammoniononanoate + CO2 + ATP = (4R,5S)-dethiobiotin + ADP + phosphate + 3 H(+). Its pathway is cofactor biosynthesis; biotin biosynthesis; biotin from 7,8-diaminononanoate: step 1/2. In terms of biological role, catalyzes a mechanistically unusual reaction, the ATP-dependent insertion of CO2 between the N7 and N8 nitrogen atoms of 7,8-diaminopelargonic acid (DAPA, also called 7,8-diammoniononanoate) to form a ureido ring. This chain is ATP-dependent dethiobiotin synthetase BioD, found in Xylella fastidiosa (strain Temecula1 / ATCC 700964).